We begin with the raw amino-acid sequence, 559 residues long: Transcription activator of gluconeogenesis ERT1-2 (559 aa).

The zn(2)-C6 fungal-type DNA-binding region spans Cys23–Cys51. Disordered stretches follow at residues Asp63–Gln159, Ser231–Ala263, and Ala329–Ser349. 2 stretches are compositionally biased toward low complexity: residues Gln139–Gln159 and Ser231–Asn244. Residues Thr245 to Thr260 show a composition bias toward polar residues. A PAS domain is found at Ala440–Asp512.

The protein belongs to the ERT1/acuK family.

The protein localises to the nucleus. In terms of biological role, transcription factor which regulates nonfermentable carbon utilization. Activator of gluconeogenetic genes. This chain is Transcription activator of gluconeogenesis ERT1-2 (ERT1-2), found in Yarrowia lipolytica (strain CLIB 122 / E 150) (Yeast).